A 160-amino-acid polypeptide reads, in one-letter code: 2-C-methyl-D-erythritol 2,4-cyclodiphosphate synthase (160 aa).

2 residues coordinate a divalent metal cation: D11 and H13. Residues 11–13 and 37–38 contribute to the 4-CDP-2-C-methyl-D-erythritol 2-phosphate site; these read DVH and HS. H45 is an a divalent metal cation binding site. 4-CDP-2-C-methyl-D-erythritol 2-phosphate contacts are provided by residues 59 to 61, 64 to 68, 103 to 109, 135 to 138, F142, and R145; these read DIG, FPDTD, AQAPKMA, and TTTE.

Belongs to the IspF family. Homotrimer. A divalent metal cation serves as cofactor.

It catalyses the reaction 4-CDP-2-C-methyl-D-erythritol 2-phosphate = 2-C-methyl-D-erythritol 2,4-cyclic diphosphate + CMP. Its pathway is isoprenoid biosynthesis; isopentenyl diphosphate biosynthesis via DXP pathway; isopentenyl diphosphate from 1-deoxy-D-xylulose 5-phosphate: step 4/6. Functionally, involved in the biosynthesis of isopentenyl diphosphate (IPP) and dimethylallyl diphosphate (DMAPP), two major building blocks of isoprenoid compounds. Catalyzes the conversion of 4-diphosphocytidyl-2-C-methyl-D-erythritol 2-phosphate (CDP-ME2P) to 2-C-methyl-D-erythritol 2,4-cyclodiphosphate (ME-CPP) with a corresponding release of cytidine 5-monophosphate (CMP). This Thioalkalivibrio sulfidiphilus (strain HL-EbGR7) protein is 2-C-methyl-D-erythritol 2,4-cyclodiphosphate synthase.